A 337-amino-acid chain; its full sequence is MYSLDFLASKLDGEVKGDKNVEIKKIATLSQAGEGDISFCTNPKYLKALSETKASAVLITEEVLEFCNTNAVVLSNPYMALAKVMELFDKSPRPDGKIHSKAVIAASAIIGENVTIGANAVVGENVVIGDNVYIGACATIDNGTKIGNDTLIKSNVSIAHDVVIGTGCIIHQNAVIGCDGFGNARDEDGSWTKIPQLGRVIIEDDVEIGSGTTVDRGAIDDTIIKKGARIDNLVQIAHNVVIGRNTALAGVTAVAGSTTIGDNCLIGGQSAITGHISICDNTIIGGASNIGKSITKPGMYYAAFEAKPRIQWGRFVAKLAKIDTLITKVKQLEEKIK.

Catalysis depends on His238, which acts as the Proton acceptor.

The protein belongs to the transferase hexapeptide repeat family. LpxD subfamily. In terms of assembly, homotrimer.

The catalysed reaction is a UDP-3-O-[(3R)-3-hydroxyacyl]-alpha-D-glucosamine + a (3R)-hydroxyacyl-[ACP] = a UDP-2-N,3-O-bis[(3R)-3-hydroxyacyl]-alpha-D-glucosamine + holo-[ACP] + H(+). It functions in the pathway bacterial outer membrane biogenesis; LPS lipid A biosynthesis. Catalyzes the N-acylation of UDP-3-O-acylglucosamine using 3-hydroxyacyl-ACP as the acyl donor. Is involved in the biosynthesis of lipid A, a phosphorylated glycolipid that anchors the lipopolysaccharide to the outer membrane of the cell. In Francisella tularensis subsp. tularensis (strain FSC 198), this protein is UDP-3-O-acylglucosamine N-acyltransferase 2.